The primary structure comprises 68 residues: Antimicrobial peptide VpCT3 (68 aa).

A signal peptide spans 1–23 (MKTQIVILIVAVLVLQLVSQSDA). At L36 the chain carries Leucine amide. Positions 37–68 (GKRGLKNLDQYNDLFDGEISDADIKFLQDLMR) are excised as a propeptide.

The protein belongs to the non-disulfide-bridged peptide (NDBP) superfamily. Short antimicrobial peptide (group 4) family. In terms of tissue distribution, expressed by the venom gland.

The protein resides in the secreted. The protein localises to the target cell membrane. In terms of biological role, antimicrobial peptide with weak activity against all bacteria tested (MIC&gt;100 uM) and all yeasts tested (MIC&gt;200 uM). Also provokes weak hemolysis on human erythrocytes (HC(50)=83.7 uM). In Mesomexovis punctatus (Scorpion), this protein is Antimicrobial peptide VpCT3.